Here is a 295-residue protein sequence, read N- to C-terminus: 33 kDa chaperonin (295 aa).

Disulfide bonds link Cys-237–Cys-239 and Cys-270–Cys-273.

This sequence belongs to the HSP33 family. Under oxidizing conditions two disulfide bonds are formed involving the reactive cysteines. Under reducing conditions zinc is bound to the reactive cysteines and the protein is inactive.

It is found in the cytoplasm. Redox regulated molecular chaperone. Protects both thermally unfolding and oxidatively damaged proteins from irreversible aggregation. Plays an important role in the bacterial defense system toward oxidative stress. In Lactiplantibacillus plantarum (strain ATCC BAA-793 / NCIMB 8826 / WCFS1) (Lactobacillus plantarum), this protein is 33 kDa chaperonin.